A 475-amino-acid chain; its full sequence is Ribulose bisphosphate carboxylase large chain (475 aa).

A propeptide spanning residues 1-2 (MS) is cleaved from the precursor. N-acetylproline is present on P3. The residue at position 14 (K14) is an N6,N6,N6-trimethyllysine. Substrate is bound by residues N123 and T173. The Proton acceptor role is filled by K175. Residue K177 coordinates substrate. Mg(2+) is bound by residues K201, D203, and E204. K201 bears the N6-carboxylysine mark. H294 serves as the catalytic Proton acceptor. Substrate contacts are provided by R295, H327, and S379.

Belongs to the RuBisCO large chain family. Type I subfamily. Heterohexadecamer of 8 large chains and 8 small chains; disulfide-linked. The disulfide link is formed within the large subunit homodimers. Mg(2+) is required as a cofactor. In terms of processing, the disulfide bond which can form in the large chain dimeric partners within the hexadecamer appears to be associated with oxidative stress and protein turnover.

It is found in the plastid. It localises to the chloroplast. The catalysed reaction is 2 (2R)-3-phosphoglycerate + 2 H(+) = D-ribulose 1,5-bisphosphate + CO2 + H2O. The enzyme catalyses D-ribulose 1,5-bisphosphate + O2 = 2-phosphoglycolate + (2R)-3-phosphoglycerate + 2 H(+). Functionally, ruBisCO catalyzes two reactions: the carboxylation of D-ribulose 1,5-bisphosphate, the primary event in carbon dioxide fixation, as well as the oxidative fragmentation of the pentose substrate in the photorespiration process. Both reactions occur simultaneously and in competition at the same active site. The protein is Ribulose bisphosphate carboxylase large chain of Magnolia macrophylla (Bigleaf magnolia).